Consider the following 397-residue polypeptide: Elongation factor Tu (397 aa).

One can recognise a tr-type G domain in the interval 10–207 (KPHLNIGTIG…AVDAYIPEPE (198 aa)). Residues 19–26 (GHVDHGKT) form a G1 region. Residue 19 to 26 (GHVDHGKT) coordinates GTP. A Mg(2+)-binding site is contributed by threonine 26. The G2 stretch occupies residues 60–64 (GVTIN). The segment at 81-84 (DCPG) is G3. Residues 81 to 85 (DCPGH) and 136 to 139 (NKVD) each bind GTP. Residues 136–139 (NKVD) form a G4 region. The G5 stretch occupies residues 174–176 (SAL).

The protein belongs to the TRAFAC class translation factor GTPase superfamily. Classic translation factor GTPase family. EF-Tu/EF-1A subfamily. In terms of assembly, monomer.

Its subcellular location is the cytoplasm. The enzyme catalyses GTP + H2O = GDP + phosphate + H(+). GTP hydrolase that promotes the GTP-dependent binding of aminoacyl-tRNA to the A-site of ribosomes during protein biosynthesis. This Syntrophus aciditrophicus (strain SB) protein is Elongation factor Tu.